Here is a 187-residue protein sequence, read N- to C-terminus: Insulin-like growth factor 2 (187 aa).

A signal peptide spans 1 to 23 (MCAARQILLLLLAFLAYALDSAA). Positions 25–51 (YGTAETLCGGELVDTLQFVCGDRGFYF) are b. 3 disulfides stabilise this stretch: C32/C71, C44/C84, and C70/C75. Residues 52 to 64 (SRPVGRNNRRINR) form a c region. Residues 64-85 (RGIVEECCFRSCDLALLETYCA) form an a region. Residues 86–91 (KSVKSE) form a d region. The propeptide at 92–187 (RDLSATSLAG…ASPEATGPQE (96 aa)) is e peptide. A disordered region spans residues 162–187 (HRPLISLPSQRPPAPRASPEATGPQE).

The protein belongs to the insulin family.

It localises to the secreted. In terms of biological role, the insulin-like growth factors, isolated from plasma, are structurally and functionally related to insulin but have a much higher growth-promoting activity. Acts as a ligand for integrin which is required for IGF2 signaling. The polypeptide is Insulin-like growth factor 2 (Gallus gallus (Chicken)).